Reading from the N-terminus, the 27-residue chain is Cupiennin-4a (27 aa).

A Glutamic acid 1-amide modification is found at E27.

Expressed by the venom gland.

The protein localises to the secreted. The sequence is that of Cupiennin-4a from Cupiennius salei (American wandering spider).